We begin with the raw amino-acid sequence, 364 residues long: DNA replication and repair protein RecF (364 aa).

30–37 is a binding site for ATP; that stretch reads GNNGQGKT.

Belongs to the RecF family.

It localises to the cytoplasm. Functionally, the RecF protein is involved in DNA metabolism; it is required for DNA replication and normal SOS inducibility. RecF binds preferentially to single-stranded, linear DNA. It also seems to bind ATP. The polypeptide is DNA replication and repair protein RecF (Geobacter sp. (strain M21)).